The primary structure comprises 65 residues: U15-hexatoxin-Mg1b (65 aa).

In terms of processing, contains 4 disulfide bonds. In terms of tissue distribution, expressed by the venom gland.

The protein resides in the secreted. In vivo, intrathorax injection into crickets causes death. This chain is U15-hexatoxin-Mg1b, found in Macrothele gigas (Japanese funnel web spider).